A 214-amino-acid chain; its full sequence is Predicted GPI-anchored protein 57 (214 aa).

A signal peptide spans 1 to 18 (MLFTQLIILFTFISQIIC). The segment at 36–101 (RGSSGHSSGG…SSGSSSGSRN (66 aa)) is disordered. The span at 42–60 (SSGGGHSSSGSHSSGGGHS) shows a compositional bias: gly residues. The span at 76 to 85 (SGSSSGSSSG) shows a compositional bias: low complexity. N-linked (GlcNAc...) asparagine glycosylation occurs at N182. Residue G191 is the site of GPI-anchor amidated glycine attachment. The propeptide at 192-214 (VSLNIPSTHFYVIGLAAAYSIVL) is removed in mature form.

Belongs to the PGA37 family.

Its subcellular location is the secreted. The protein resides in the cell membrane. Its function is as follows. Predicted GPI-anchored protein which may have a role during host infection. In Candida albicans (strain SC5314 / ATCC MYA-2876) (Yeast), this protein is Predicted GPI-anchored protein 57 (PGA57).